A 618-amino-acid polypeptide reads, in one-letter code: Putative ATP-dependent DNA helicase Q1 (618 aa).

Residues 95-270 (INAVMSKEDA…KKMLGIPVAI (176 aa)) form the Helicase ATP-binding domain. Position 108–115 (108–115 (LSTGGGKS)) interacts with ATP. Residues 214-217 (DEVH) carry the DEVH box motif. The region spanning 295–443 (CVEKIVRTIK…NLYNMVRYAS (149 aa)) is the Helicase C-terminal domain. Zn(2+) is bound by residues C448, C466, C470, and C473. The disordered stretch occupies residues 586-618 (KGRAEENNRKRKAAVTSSDEEVDVGDDDDVITL). The segment covering 603–618 (SDEEVDVGDDDDVITL) has biased composition (acidic residues).

This sequence belongs to the helicase family. RecQ subfamily. The cofactor is Zn(2+).

The protein resides in the nucleus. The catalysed reaction is Couples ATP hydrolysis with the unwinding of duplex DNA by translocating in the 3'-5' direction.. It catalyses the reaction ATP + H2O = ADP + phosphate + H(+). DNA helicase that may play a role in the repair of DNA that is damaged by ultraviolet light or other mutagens. Exhibits a magnesium-dependent ATP-dependent DNA-helicase activity that unwinds single- and double-stranded DNA in a 3'-5' direction. This Caenorhabditis briggsae protein is Putative ATP-dependent DNA helicase Q1.